A 282-amino-acid polypeptide reads, in one-letter code: 2,3,4,5-tetrahydropyridine-2,6-dicarboxylate N-succinyltransferase (282 aa).

Substrate is bound by residues Arg109 and Asp146.

Belongs to the transferase hexapeptide repeat family. Homotrimer.

Its subcellular location is the cytoplasm. The catalysed reaction is (S)-2,3,4,5-tetrahydrodipicolinate + succinyl-CoA + H2O = (S)-2-succinylamino-6-oxoheptanedioate + CoA. It participates in amino-acid biosynthesis; L-lysine biosynthesis via DAP pathway; LL-2,6-diaminopimelate from (S)-tetrahydrodipicolinate (succinylase route): step 1/3. The polypeptide is 2,3,4,5-tetrahydropyridine-2,6-dicarboxylate N-succinyltransferase (Bartonella bacilliformis (strain ATCC 35685 / KC583 / Herrer 020/F12,63)).